The following is a 609-amino-acid chain: DNA-directed RNA polymerase subunit beta' (609 aa).

Zn(2+) contacts are provided by Cys-67, Cys-69, Cys-82, and Cys-85. 3 residues coordinate Mg(2+): Asp-460, Asp-462, and Asp-464.

The protein belongs to the RNA polymerase beta' chain family. RpoC1 subfamily. In terms of assembly, in plastids the minimal PEP RNA polymerase catalytic core is composed of four subunits: alpha, beta, beta', and beta''. When a (nuclear-encoded) sigma factor is associated with the core the holoenzyme is formed, which can initiate transcription. Mg(2+) serves as cofactor. Zn(2+) is required as a cofactor.

It is found in the plastid. It localises to the chloroplast. It carries out the reaction RNA(n) + a ribonucleoside 5'-triphosphate = RNA(n+1) + diphosphate. DNA-dependent RNA polymerase catalyzes the transcription of DNA into RNA using the four ribonucleoside triphosphates as substrates. The sequence is that of DNA-directed RNA polymerase subunit beta' from Emiliania huxleyi (Coccolithophore).